Here is a 209-residue protein sequence, read N- to C-terminus: Prolactin (209 aa).

The signal sequence occupies residues 1 to 24; sequence MAQRFKGRSLFLTALLCLASQGYA. Disulfide bonds link Cys-70/Cys-184 and Cys-201/Cys-209.

The protein belongs to the somatotropin/prolactin family.

It localises to the secreted. The sequence is that of Prolactin (prl) from Anguilla anguilla (European freshwater eel).